We begin with the raw amino-acid sequence, 487 residues long: Serine/threonine-protein kinase 4 (487 aa).

N-acetylmethionine is present on M1. A Phosphothreonine modification is found at T3. The Protein kinase domain occupies 30–281 (FDVLEKLGEG…ATQLLQHPFV (252 aa)). ATP is bound by residues 36-44 (LGEGSYGSV) and K59. D149 serves as the catalytic Proton acceptor. T183 is subject to Phosphothreonine; by autocatalysis. Residue S265 is modified to Phosphoserine. The stretch at 290 to 310 (LRDLINEAMDVKLKRQESQQR) forms a coiled coil. Positions 303–312 (KRQESQQREV) are enriched in basic and acidic residues. Residues 303 to 332 (KRQESQQREVDQDDEENSEEDEMDSGTMVR) form a disordered region. Acidic residues predominate over residues 313–326 (DQDDEENSEEDEMD). S320 is subject to Phosphoserine. Residues T340 and T367 each carry the phosphothreonine modification. T387 bears the Phosphothreonine; by PKB/AKT1 mark. Phosphoserine is present on residues S410 and S414. Y433 is subject to Phosphotyrosine. An SARAH domain is found at 433-480 (YEFLKSWTVEDLQKRLLALDPMMEQEIEEIRQKYQSKRQPILDAIEAK).

This sequence belongs to the protein kinase superfamily. STE Ser/Thr protein kinase family. STE20 subfamily. In terms of assembly, homodimer; mediated via the coiled-coil region. Interacts with NORE1, which inhibits autoactivation. Interacts with and stabilizes SAV1. Interacts with RASSF1. Interacts with FOXO3. Interacts with RASSF2 (via SARAH domain). Interacts with AR, PKB/AKT1, TNNI3 and SIRT1. Interacts with DLG5 (via PDZ domain 3). Interacts with MARK3 and SCRIB in the presence of DLG5. Mg(2+) is required as a cofactor. In terms of processing, autophosphorylated on serine and threonine residues. Phosphorylation at Thr-387 by PKB/AKT1, leads to inhibition of its: kinase activity, nuclear translocation and autophosphorylation at Thr-183. It also diminishes its cleavage by caspases and its ability to phosphorylate FOXO3. Proteolytically cleaved by caspase-3 during apoptosis at Asp-326 and Asp-349 resulting in a 37 kDa or a 39 kDa subunit respectively. The 39 kDa subunit is further cleaved into the 37 kDa form. Proteolytic cleavage results in kinase activation and nuclear translocation of the truncated form (MST1/N). It is less likely that cleavage at Asp-349 is a prerequisite for activation as this site is not conserved in the murine ortholog.

The protein resides in the cytoplasm. It localises to the nucleus. The catalysed reaction is L-seryl-[protein] + ATP = O-phospho-L-seryl-[protein] + ADP + H(+). The enzyme catalyses L-threonyl-[protein] + ATP = O-phospho-L-threonyl-[protein] + ADP + H(+). Inhibited by the C-terminal non-catalytic region. Activated by caspase-cleavage. Full activation also requires homodimerization and autophosphorylation of Thr-183. Activated by RASSF1 which acts by preventing its dephosphorylation. Stress-activated, pro-apoptotic kinase which, following caspase-cleavage, enters the nucleus and induces chromatin condensation followed by internucleosomal DNA fragmentation. Key component of the Hippo signaling pathway which plays a pivotal role in organ size control and tumor suppression by restricting proliferation and promoting apoptosis. The core of this pathway is composed of a kinase cascade wherein STK3/MST2 and STK4/MST1, in complex with its regulatory protein SAV1, phosphorylates and activates LATS1/2 in complex with its regulatory protein MOB1, which in turn phosphorylates and inactivates YAP1 oncoprotein and WWTR1/TAZ. Phosphorylation of YAP1 by LATS2 inhibits its translocation into the nucleus to regulate cellular genes important for cell proliferation, cell death, and cell migration. STK3/MST2 and STK4/MST1 are required to repress proliferation of mature hepatocytes, to prevent activation of facultative adult liver stem cells (oval cells), and to inhibit tumor formation. Phosphorylates 'Ser-14' of histone H2B (H2BS14ph) during apoptosis. Phosphorylates FOXO3 upon oxidative stress, which results in its nuclear translocation and cell death initiation. Phosphorylates MOBKL1A, MOBKL1B and RASSF2. Phosphorylates TNNI3 (cardiac Tn-I) and alters its binding affinity to TNNC1 (cardiac Tn-C) and TNNT2 (cardiac Tn-T). Phosphorylates FOXO1 on 'Ser-212' and regulates its activation and stimulates transcription of PMAIP1 in a FOXO1-dependent manner. Phosphorylates SIRT1 and inhibits SIRT1-mediated p53/TP53 deacetylation, thereby promoting p53/TP53 dependent transcription and apoptosis upon DNA damage. Acts as an inhibitor of PKB/AKT1. Phosphorylates AR on 'Ser-650' and suppresses its activity by intersecting with PKB/AKT1 signaling and antagonizing formation of AR-chromatin complexes. The polypeptide is Serine/threonine-protein kinase 4 (STK4) (Aotus nancymaae (Ma's night monkey)).